A 454-amino-acid polypeptide reads, in one-letter code: Bifunctional protein GlmU (454 aa).

Positions 1 to 226 are pyrophosphorylase; the sequence is MALNVVILAA…AIEVEGANNR (226 aa). Residues 8 to 11, Lys-22, Gln-73, 78 to 79, 100 to 102, Gly-137, Glu-151, Asn-166, and Asn-224 each bind UDP-N-acetyl-alpha-D-glucosamine; these read LAAG, GT, and YGD. Asp-102 is a Mg(2+) binding site. Asn-224 serves as a coordination point for Mg(2+). Positions 227-247 are linker; the sequence is VQLAQLERAYQAREAEKLMLA. Residues 248-454 form an N-acetyltransferase region; the sequence is GANLRDPHRI…DWKRPVKIKK (207 aa). Arg-330 and Lys-348 together coordinate UDP-N-acetyl-alpha-D-glucosamine. Catalysis depends on His-360, which acts as the Proton acceptor. The UDP-N-acetyl-alpha-D-glucosamine site is built by Tyr-363 and Asn-374. Residues Ala-377, 383–384, Ser-402, Ala-420, and Arg-437 each bind acetyl-CoA; that span reads NY.

This sequence in the N-terminal section; belongs to the N-acetylglucosamine-1-phosphate uridyltransferase family. In the C-terminal section; belongs to the transferase hexapeptide repeat family. As to quaternary structure, homotrimer. The cofactor is Mg(2+).

It is found in the cytoplasm. The enzyme catalyses alpha-D-glucosamine 1-phosphate + acetyl-CoA = N-acetyl-alpha-D-glucosamine 1-phosphate + CoA + H(+). It catalyses the reaction N-acetyl-alpha-D-glucosamine 1-phosphate + UTP + H(+) = UDP-N-acetyl-alpha-D-glucosamine + diphosphate. It functions in the pathway nucleotide-sugar biosynthesis; UDP-N-acetyl-alpha-D-glucosamine biosynthesis; N-acetyl-alpha-D-glucosamine 1-phosphate from alpha-D-glucosamine 6-phosphate (route II): step 2/2. It participates in nucleotide-sugar biosynthesis; UDP-N-acetyl-alpha-D-glucosamine biosynthesis; UDP-N-acetyl-alpha-D-glucosamine from N-acetyl-alpha-D-glucosamine 1-phosphate: step 1/1. Its pathway is bacterial outer membrane biogenesis; LPS lipid A biosynthesis. Catalyzes the last two sequential reactions in the de novo biosynthetic pathway for UDP-N-acetylglucosamine (UDP-GlcNAc). The C-terminal domain catalyzes the transfer of acetyl group from acetyl coenzyme A to glucosamine-1-phosphate (GlcN-1-P) to produce N-acetylglucosamine-1-phosphate (GlcNAc-1-P), which is converted into UDP-GlcNAc by the transfer of uridine 5-monophosphate (from uridine 5-triphosphate), a reaction catalyzed by the N-terminal domain. This chain is Bifunctional protein GlmU, found in Shewanella putrefaciens (strain CN-32 / ATCC BAA-453).